The primary structure comprises 1642 residues: Cholesterol transporter ABCA5 (1642 aa).

A helical transmembrane segment spans residues 32–52; the sequence is SVQEILFPLFFLFWLILISMM. Residues N86 and N190 are each glycosylated (N-linked (GlcNAc...) asparagine). A run of 6 helical transmembrane segments spans residues 220–240, 264–284, 297–317, 327–347, 355–375, and 396–416; these read VILIYLVIAFSPFGYFLAIHI, LSWVLLYTSLIFLMSLLMAVI, IVIFLLFFLYGLSSVFFALML, VGVVEFFVTVVFGFVGLLIVL, LVWLFSPLCQCAFLIGIAQVM, and LIITLTMLALDSVFYALLAVY. The N-linked (GlcNAc...) asparagine glycan is linked to N458. The region spanning 478-713 is the ABC transporter 1 domain; sequence IRISGIQKAY…WGIGYRLSMY (236 aa). 514 to 521 contributes to the ATP binding site; sequence GHSGTGKS. Residues 866 to 886 form a helical membrane-spanning segment; the sequence is LLLLLIFFAVQIFMFLVHHSF. N-linked (GlcNAc...) asparagine glycosylation is present at N919. The chain crosses the membrane as a helical span at residues 967 to 987; that stretch reads VFTAVFNSTMVYSLPVMMNII. The N-linked (GlcNAc...) asparagine glycan is linked to N996. A run of 6 helical transmembrane segments spans residues 1021 to 1041, 1071 to 1091, 1102 to 1122, 1139 to 1159, 1164 to 1184, and 1207 to 1227; these read LYFQAALLGIIVTAMPPYFAM, VVDIPLFFVVLTLMLGSLFAF, FLAVVFCLIAYVPSVILFTYI, FIYSVTALACVAVTEITFFLG, AVFHYTFCIAIPIYPLLGCLI, and LLVAVIMPYLQCVLWIFLLQH. An ABC transporter 2 domain is found at 1290-1533; that stretch reads IMVYNLHKEY…FGKGYFLEIK (244 aa). 1333 to 1340 serves as a coordination point for ATP; that stretch reads GPNGAGKS.

This sequence belongs to the ABC transporter superfamily. ABCA family. Post-translationally, N-glycosylated. In terms of tissue distribution, expressed in testis, epididymis, lung and brain.

It is found in the lysosome membrane. The protein localises to the late endosome membrane. It localises to the golgi apparatus membrane. The protein resides in the cell membrane. It catalyses the reaction cholesterol(in) + ATP + H2O = cholesterol(out) + ADP + phosphate + H(+). Cholesterol efflux transporter in macrophages that is responsible for APOAI/high-density lipoproteins (HDL) formation at the plasma membrane under high cholesterol levels and participates in reverse cholesterol transport. May play a role in the processing of autolysosomes. This is Cholesterol transporter ABCA5 from Rattus norvegicus (Rat).